Here is a 518-residue protein sequence, read N- to C-terminus: 2-isopropylmalate synthase (518 aa).

The Pyruvate carboxyltransferase domain occupies 5–267; the sequence is VIIFDTTLRD…STNIKHKEIY (263 aa). The Mn(2+) site is built by Asp14, His202, His204, and Asn238. The segment at 392–518 is regulatory domain; sequence SLSFFSVQSI…KLKTLKKVNN (127 aa).

It belongs to the alpha-IPM synthase/homocitrate synthase family. LeuA type 1 subfamily. Homodimer. Mn(2+) serves as cofactor.

It localises to the cytoplasm. It catalyses the reaction 3-methyl-2-oxobutanoate + acetyl-CoA + H2O = (2S)-2-isopropylmalate + CoA + H(+). Its pathway is amino-acid biosynthesis; L-leucine biosynthesis; L-leucine from 3-methyl-2-oxobutanoate: step 1/4. Catalyzes the condensation of the acetyl group of acetyl-CoA with 3-methyl-2-oxobutanoate (2-ketoisovalerate) to form 3-carboxy-3-hydroxy-4-methylpentanoate (2-isopropylmalate). The sequence is that of 2-isopropylmalate synthase from Buchnera aphidicola subsp. Schizaphis graminum (strain Sg).